Reading from the N-terminus, the 256-residue chain is Alcohol dehydrogenase (256 aa).

12–41 (FVAGLGGIGLDTTKELLKRDLKNLVILDRI) is a binding site for NAD(+). S140 is a substrate binding site. Y153 (proton acceptor) is an active-site residue.

It belongs to the short-chain dehydrogenases/reductases (SDR) family. Homodimer.

It carries out the reaction a primary alcohol + NAD(+) = an aldehyde + NADH + H(+). The enzyme catalyses a secondary alcohol + NAD(+) = a ketone + NADH + H(+). The polypeptide is Alcohol dehydrogenase (Drosophila ananassae (Fruit fly)).